The chain runs to 568 residues: Proline--tRNA ligase (568 aa).

It belongs to the class-II aminoacyl-tRNA synthetase family. ProS type 1 subfamily. As to quaternary structure, homodimer.

Its subcellular location is the cytoplasm. It catalyses the reaction tRNA(Pro) + L-proline + ATP = L-prolyl-tRNA(Pro) + AMP + diphosphate. In terms of biological role, catalyzes the attachment of proline to tRNA(Pro) in a two-step reaction: proline is first activated by ATP to form Pro-AMP and then transferred to the acceptor end of tRNA(Pro). As ProRS can inadvertently accommodate and process non-cognate amino acids such as alanine and cysteine, to avoid such errors it has two additional distinct editing activities against alanine. One activity is designated as 'pretransfer' editing and involves the tRNA(Pro)-independent hydrolysis of activated Ala-AMP. The other activity is designated 'posttransfer' editing and involves deacylation of mischarged Ala-tRNA(Pro). The misacylated Cys-tRNA(Pro) is not edited by ProRS. This Macrococcus caseolyticus (strain JCSC5402) (Macrococcoides caseolyticum) protein is Proline--tRNA ligase.